Here is a 316-residue protein sequence, read N- to C-terminus: Ribosomal RNA small subunit methyltransferase H (316 aa).

S-adenosyl-L-methionine contacts are provided by residues 35 to 37, D55, F79, D101, and Q108; that span reads GGH.

This sequence belongs to the methyltransferase superfamily. RsmH family.

The protein resides in the cytoplasm. The enzyme catalyses cytidine(1402) in 16S rRNA + S-adenosyl-L-methionine = N(4)-methylcytidine(1402) in 16S rRNA + S-adenosyl-L-homocysteine + H(+). In terms of biological role, specifically methylates the N4 position of cytidine in position 1402 (C1402) of 16S rRNA. The polypeptide is Ribosomal RNA small subunit methyltransferase H (Vibrio proteolyticus (Aeromonas proteolytica)).